Reading from the N-terminus, the 393-residue chain is Probable hydrolase sll0100 (393 aa).

The protein belongs to the peptidase M20 family.

In Synechocystis sp. (strain ATCC 27184 / PCC 6803 / Kazusa), this protein is Probable hydrolase sll0100.